A 705-amino-acid chain; its full sequence is Gamma-adducin (705 aa).

Residues 1-10 (MSSDTSQAVI) show a composition bias toward polar residues. Positions 1–22 (MSSDTSQAVITTPPPPSMPHKE) are disordered. Position 2 is an N-acetylserine (Ser2). 8 positions are modified to phosphoserine: Ser31, Ser42, Ser64, Ser402, Ser414, Ser423, Ser442, and Ser461. 4 disordered regions span residues 472–495 (EDPSKVSSGTPIKIEDPNQFVPLN), 535–556 (PSTMRFEDDDQGPPAPPNPFSH), 572–612 (KQQG…EENH), and 658–705 (EITI…KVEA). A Glycyl lysine isopeptide (Lys-Gly) (interchain with G-Cter in SUMO2) cross-link involves residue Lys484. 7 positions are modified to phosphoserine: Ser583, Ser585, Ser590, Ser672, Ser676, Ser678, and Ser680. A compositionally biased stretch (low complexity) spans 590–605 (SVSQIQSQTQSPQSVP). The segment covering 681-705 (PSKKKKKFRTPSFLKKNKKKEKVEA) has biased composition (basic residues). Phosphoserine; by PKC is present on Ser682. Residues 683–700 (KKKKKFRTPSFLKKNKKK) form an interaction with calmodulin region.

This sequence belongs to the aldolase class II family. Adducin subfamily. In terms of assembly, heterodimer of an alpha and a gamma subunit. Sumoylated. In terms of processing, proteolytically cleaved by asparagine endopeptidase (AEP) into 2 fragments. Overexpression of the 1-357 fragment induces neuronal apoptosis, and overexpression of either 1-357 or 358-706 fragment increases the degeneration of dendritic spines. Overexpression of the 1-357 fragment impairs neurite outgrowth by downregulating the expression of Rac2, and induces synaptic dysfunction and cognitive impairments in tau P301S transgenic mice, a mouse model for Alzheimer disease (AD). Expressed in kidney, brain, spleen, liver and heart. As to expression, expressed in renal interlobular arteries, afferent/efferent arterioles, parietal glomerular epithelial cells and microvilli of the luminal surface of the proximal tubule (at protein level). Expressed in podocytes (at protein level) Expressed in renal cortex (at protein level). Expressed in primary vascular smooth muscle cells (VSMCs) of the kidney (at protein level). Expressed in tubular cells and glomeruli (at protein level).

It localises to the cytoplasm. It is found in the cytoskeleton. Its subcellular location is the cell membrane. Membrane-cytoskeleton-associated protein that promotes the assembly of the spectrin-actin network. Plays a role in actin filament capping. Binds to calmodulin. Involved in myogenic reactivity of the renal afferent arteriole (Af-art), renal interlobular arteries and middle cerebral artery (MCA) to increased perfusion pressure. Involved in regulation of potassium channels in the vascular smooth muscle cells (VSMCs) of the Af-art and MCA ex vivo. Involved in regulation of glomerular capillary pressure, glomerular filtration rate (GFR) and glomerular nephrin expression in response to hypertension. Involved in renal blood flow (RBF) autoregulation. Plays a role in podocyte structure and function. Regulates globular monomer actin (G-actin) and filamentous polymer actin (F-actin) ratios in the primary podocytes affecting actin cytoskeleton organization. Regulates expression of synaptopodin, RhoA, Rac1 and CDC42 in the renal cortex and the primary podocytes. Regulates expression of nephrin in the glomeruli and in the primary podocytes, expression of nephrin and podocinin in the renal cortex, and expression of focal adhesion proteins integrin alpha-3 and integrin beta-1 in the glomeruli. Involved in cell migration and cell adhesion of podocytes, and in podocyte foot process effacement. Regulates expression of profibrotics markers MMP2, MMP9, TGF beta-1, tubular tight junction protein E-cadherin, and mesenchymal markers vimentin and alpha-SMA. Promotes the growth of neurites. This chain is Gamma-adducin (Add3), found in Rattus norvegicus (Rat).